The chain runs to 245 residues: Ribonuclease 3 (245 aa).

The region spanning Phe-17–Gly-146 is the RNase III domain. Glu-59 lines the Mg(2+) pocket. Asp-63 is a catalytic residue. Asp-132 and Glu-135 together coordinate Mg(2+). Glu-135 is an active-site residue. The 70-residue stretch at Asp-172–Asn-241 folds into the DRBM domain.

This sequence belongs to the ribonuclease III family. In terms of assembly, homodimer. It depends on Mg(2+) as a cofactor.

It is found in the cytoplasm. It catalyses the reaction Endonucleolytic cleavage to 5'-phosphomonoester.. Its function is as follows. Digests double-stranded RNA. Involved in the processing of primary rRNA transcript to yield the immediate precursors to the large and small rRNAs (23S and 16S). Processes some mRNAs, and tRNAs when they are encoded in the rRNA operon. Processes pre-crRNA and tracrRNA of type II CRISPR loci if present in the organism. This Staphylococcus epidermidis (strain ATCC 35984 / DSM 28319 / BCRC 17069 / CCUG 31568 / BM 3577 / RP62A) protein is Ribonuclease 3.